Consider the following 469-residue polypeptide: Glutamine synthetase (469 aa).

Residues Asn-15–Thr-96 form the GS beta-grasp domain. One can recognise a GS catalytic domain in the interval Pro-104–Ile-469. Glu-129 and Glu-131 together coordinate Mg(2+). Glu-205 contacts ATP. Residues Glu-210 and Glu-218 each coordinate Mg(2+). Position 221–223 (Tyr-221–Phe-223) interacts with ATP. L-glutamate contacts are provided by residues Asn-262–Gly-263 and Gly-263. His-267 serves as a coordination point for Mg(2+). ATP contacts are provided by residues His-269–Ser-271 and Ser-271. 3 residues coordinate L-glutamate: Arg-320, Glu-326, and Arg-338. Positions 338, 343, and 352 each coordinate ATP. Glu-357 contributes to the Mg(2+) binding site. Arg-359 provides a ligand contact to L-glutamate. At Tyr-397 the chain carries O-AMP-tyrosine.

Belongs to the glutamine synthetase family. Oligomer of 12 subunits arranged in the form of two hexagons. The cofactor is Mg(2+).

Its subcellular location is the cytoplasm. The enzyme catalyses L-glutamate + NH4(+) + ATP = L-glutamine + ADP + phosphate + H(+). With respect to regulation, the activity of this enzyme could be controlled by adenylation under conditions of abundant glutamine. Its function is as follows. Catalyzes the ATP-dependent biosynthesis of glutamine from glutamate and ammonia. This chain is Glutamine synthetase, found in Streptomyces filamentosus (Streptomyces roseosporus).